Here is a 220-residue protein sequence, read N- to C-terminus: ATP-dependent Clp protease proteolytic subunit (220 aa).

Residue Ser-122 is the Nucleophile of the active site. The active site involves His-147.

This sequence belongs to the peptidase S14 family. Fourteen ClpP subunits assemble into 2 heptameric rings which stack back to back to give a disk-like structure with a central cavity, resembling the structure of eukaryotic proteasomes.

It is found in the cytoplasm. It catalyses the reaction Hydrolysis of proteins to small peptides in the presence of ATP and magnesium. alpha-casein is the usual test substrate. In the absence of ATP, only oligopeptides shorter than five residues are hydrolyzed (such as succinyl-Leu-Tyr-|-NHMec, and Leu-Tyr-Leu-|-Tyr-Trp, in which cleavage of the -Tyr-|-Leu- and -Tyr-|-Trp bonds also occurs).. Functionally, cleaves peptides in various proteins in a process that requires ATP hydrolysis. Has a chymotrypsin-like activity. Plays a major role in the degradation of misfolded proteins. This is ATP-dependent Clp protease proteolytic subunit from Colwellia psychrerythraea (strain 34H / ATCC BAA-681) (Vibrio psychroerythus).